Here is a 711-residue protein sequence, read N- to C-terminus: Polyribonucleotide nucleotidyltransferase (711 aa).

Positions 486 and 492 each coordinate Mg(2+). Residues 553 to 612 (PRIHTIKISPDKIKDVIGKGGSVIRALTEETGTTIEIEDDGTVKIAATDGEKAKFAIRRI) form the KH domain. An S1 motif domain is found at 622–690 (GRIYNGKVTR…RQGRVRLSIK (69 aa)). Residues 690–711 (KEATEQTQPAAAPEAPAAEQGE) form a disordered region. The span at 694-711 (EQTQPAAAPEAPAAEQGE) shows a compositional bias: low complexity.

The protein belongs to the polyribonucleotide nucleotidyltransferase family. Component of the RNA degradosome, which is a multiprotein complex involved in RNA processing and mRNA degradation. Mg(2+) is required as a cofactor.

Its subcellular location is the cytoplasm. It carries out the reaction RNA(n+1) + phosphate = RNA(n) + a ribonucleoside 5'-diphosphate. Its function is as follows. Involved in mRNA degradation. Catalyzes the phosphorolysis of single-stranded polyribonucleotides processively in the 3'- to 5'-direction. This chain is Polyribonucleotide nucleotidyltransferase, found in Enterobacter sp. (strain 638).